A 323-amino-acid chain; its full sequence is Probable cell division protein WhiA (323 aa).

Residues Thr275 to Ser309 constitute a DNA-binding region (H-T-H motif).

The protein belongs to the WhiA family.

Involved in cell division and chromosome segregation. This Listeria monocytogenes serotype 4b (strain CLIP80459) protein is Probable cell division protein WhiA.